Here is a 723-residue protein sequence, read N- to C-terminus: MSEKQVFSTEWAGKTLSVEVGQLAKQASGAALIRYGDTVVLTAAVGSKKPRPGDFFPLTVNYEEKMYSVGKVPGGFLKREGRPSDRATLTARLIDRPIRPLFAEGFRNEVQITSTVFSVDQDCSPEMAAMLGSSVALVISDIPFEGPIAGVDVGRIDGKYVINPTIEQAEKSDISLTVAGTYDAINMVEAGAKEVSEEAMLEAIMFGHEEIKRLCEFQQQIIAAVGKEKREIELFVSDPELEAEVKAASEGKMKTAIKTEEKKAREAAIEEVKEEILESYKAKELENESEILSEVAHILEMIEKDEMRRLISQDKIRPDGRKVNEIRPLSSEVGMLPRVHGSGLFTRGQTQALSVCTLAPLREHQIIDGLGTEEYKRFMHHYNFPQFSVGETGPRRAPGRREIGHGALGERALQYVIPSEEEFPYTIRLVSEVLESNGSSSQASICGSTLAMLDAGVPIKAPVAGIAMGLVKLGDDYTILSDIQGMEDHFGDMDFKVAGTKDGITALQMDIKIDGLSRQILDEALTQAKEGRLHILEHLTSTISAPREELSAYAPKIITLNIKPEKIKDVIGPGGKQINAIIDETGVKIDIEQDGTVYIASQDQAMNRKAIAIIEDIVREVEVGEVYTGKVRRIEKFGAFVELFKGTDGLVHISELAHERVGKVEDILKLGDEVTVKVIEVDQQGRVNLSRKALLEKKEQPEGDKKPQAEKKFYPKTKKPESK.

The Mg(2+) site is built by Asp488 and Asp494. The KH domain occupies Pro555–Ile614. Residues Gly624–Lys692 enclose the S1 motif domain. Positions Lys692–Lys723 are disordered. Over residues Ala693–Lys723 the composition is skewed to basic and acidic residues.

Belongs to the polyribonucleotide nucleotidyltransferase family. Mg(2+) is required as a cofactor.

Its subcellular location is the cytoplasm. The catalysed reaction is RNA(n+1) + phosphate = RNA(n) + a ribonucleoside 5'-diphosphate. Functionally, involved in mRNA degradation. Catalyzes the phosphorolysis of single-stranded polyribonucleotides processively in the 3'- to 5'-direction. The chain is Polyribonucleotide nucleotidyltransferase from Listeria monocytogenes serovar 1/2a (strain ATCC BAA-679 / EGD-e).